A 311-amino-acid chain; its full sequence is tRNA(Ile)-lysidine synthase (311 aa).

An ATP-binding site is contributed by 32–37 (SGGPDS).

It belongs to the tRNA(Ile)-lysidine synthase family.

It localises to the cytoplasm. It catalyses the reaction cytidine(34) in tRNA(Ile2) + L-lysine + ATP = lysidine(34) in tRNA(Ile2) + AMP + diphosphate + H(+). Functionally, ligates lysine onto the cytidine present at position 34 of the AUA codon-specific tRNA(Ile) that contains the anticodon CAU, in an ATP-dependent manner. Cytidine is converted to lysidine, thus changing the amino acid specificity of the tRNA from methionine to isoleucine. The polypeptide is tRNA(Ile)-lysidine synthase (Cutibacterium acnes (strain DSM 16379 / KPA171202) (Propionibacterium acnes)).